We begin with the raw amino-acid sequence, 522 residues long: MFPWGLSCLSVLGAAGTALLCAGLLLSLAQHLWTLRWMLSRDRASTLPLPKGSMGWPFFGETLHWLVQGSRFHSSRRERYGTVFKTHLLGRPVIRVSGAENVRTILLGEHRLVRSQWPQSAHILLGSHTLLGAVGEPHRRRRKVLARVFSRAALERYVPRLQGALRHEVRSWCAAGGPVSVYDASKALTFRMAARILLGLRLDEAQCATLARTFEQLVENLFSLPLDVPFSGLRKGIRARDQLHRHLEGAISEKLHEDKAAEPGDALDLIIHSARELGHEPSMQELKESAVELLFAAFFTTASASTSLVLLLLQHPAAIAKIREELVAQGLGRACGCAPGAAGGSEGPPPDCGCEPDLSLAALGRLRYVDCVVKEVLRLLPPVSGGYRTALRTFELDGYQIPKGWSVMYSIRDTHETAAVYRSPPEGFDPERFGAAREDSRGASSRFHYIPFGGGARSCLGQELAQAVLQLLAVELVRTARWELATPAFPAMQTVPIVHPVDGLRLFFHPLTPSVAGNGLCL.

A helical transmembrane segment spans residues 9 to 29; that stretch reads LSVLGAAGTALLCAGLLLSLA. Residue Cys-459 participates in heme binding.

This sequence belongs to the cytochrome P450 family. Heme serves as cofactor. As to expression, detected in most tissues at very low level.

It is found in the membrane. The catalysed reaction is an organic molecule + reduced [NADPH--hemoprotein reductase] + O2 = an alcohol + oxidized [NADPH--hemoprotein reductase] + H2O + H(+). It catalyses the reaction all-trans-retinoate + reduced [NADPH--hemoprotein reductase] + O2 = all-trans-4-hydroxyretinoate + oxidized [NADPH--hemoprotein reductase] + H2O + H(+). The enzyme catalyses all-trans-4-hydroxyretinoate + reduced [NADPH--hemoprotein reductase] + O2 = all-trans-4-oxoretinoate + oxidized [NADPH--hemoprotein reductase] + 2 H2O + H(+). It carries out the reaction 9-cis-retinoate + reduced [NADPH--hemoprotein reductase] + O2 = 9-cis-4-hydroxyretinoate + oxidized [NADPH--hemoprotein reductase] + H2O + H(+). The catalysed reaction is 9-cis-4-hydroxyretinoate + reduced [NADPH--hemoprotein reductase] + O2 = 9-cis-4-oxoretinoate + oxidized [NADPH--hemoprotein reductase] + 2 H2O + H(+). It catalyses the reaction all-trans-4-hydroxy-13,14-dihydroretinoate + reduced [NADPH--hemoprotein reductase] + O2 = all-trans-4-oxo-13,14-dihydroretinoate + oxidized [NADPH--hemoprotein reductase] + 2 H2O + H(+). The enzyme catalyses all-trans-13,14-dihydroretinoate + reduced [NADPH--hemoprotein reductase] + O2 = all-trans-4-hydroxy-13,14-dihydroretinoate + oxidized [NADPH--hemoprotein reductase] + H2O + H(+). In terms of biological role, a cytochrome P450 monooxygenase involved in the metabolism of retinoates (RAs), the active metabolites of vitamin A, and critical signaling molecules in animals. RAs exist as at least four different isomers: all-trans-RA (atRA), 9-cis-RA, 13-cis-RA, and 9,13-dicis-RA, where atRA is considered to be the biologically active isomer, although 9-cis-RA and 13-cis-RA also have activity. Catalyzes the oxidation of atRA primarily at C-4. Oxidation of atRA limits its biological activity and initiates a degradative process leading to its eventual elimination, thereby contributes to the regulation of atRA homeostasis and signaling. Able to metabolize other RAs such as 9-cis with high efficiency. Can oxidize all-trans-13,14-dihydroretinoate (DRA) to metabolites which could include all-trans-4-oxo-DRA, all-trans-4-hydroxy-DRA, all-trans-5,8-epoxy-DRA, and all-trans-18-hydroxy-DRA. Shares sequence similarity with other CYP26 family members, but has higher affinity to 9-cis-RA and is much less sensitive to the inhibitory effects of ketoconazole. In cooperation with Cyp26a1, contributes to the CNS patterning and the development of regions of higher visual acuity. The chain is Cytochrome P450 26C1 (CYP26C1) from Homo sapiens (Human).